The primary structure comprises 123 residues: Holo-[acyl-carrier-protein] synthase (123 aa).

Residues Asp-8 and Glu-56 each coordinate Mg(2+).

This sequence belongs to the P-Pant transferase superfamily. AcpS family. Mg(2+) serves as cofactor.

Its subcellular location is the cytoplasm. The catalysed reaction is apo-[ACP] + CoA = holo-[ACP] + adenosine 3',5'-bisphosphate + H(+). Its function is as follows. Transfers the 4'-phosphopantetheine moiety from coenzyme A to a Ser of acyl-carrier-protein. The polypeptide is Holo-[acyl-carrier-protein] synthase (Clostridium botulinum (strain Alaska E43 / Type E3)).